The chain runs to 176 residues: MDLPGPIHEILMLFGGFILLLGGLGVVLLTNPIYSAFSLGLVLVCISLFYFLLNSYFVAVAQLLIYVGAINVLIIFAVMFVNGSEWSKDKNYWTIGDGFTSLVCITFVFSLMTTIPDTSWYGILWTTRSNQIVEQGLINNVQQIGIHLATDFYLPFELISIILLVSLIGAITMARQ.

Transmembrane regions (helical) follow at residues 10 to 30, 33 to 53, 60 to 80, 95 to 115, and 152 to 172; these read ILML…VLLT, IYSA…YFLL, VAQL…AVMF, IGDG…MTTI, and FYLP…GAIT.

This sequence belongs to the complex I subunit 6 family. In terms of assembly, NDH is composed of at least 16 different subunits, 5 of which are encoded in the nucleus.

It is found in the plastid. Its subcellular location is the chloroplast thylakoid membrane. The catalysed reaction is a plastoquinone + NADH + (n+1) H(+)(in) = a plastoquinol + NAD(+) + n H(+)(out). It catalyses the reaction a plastoquinone + NADPH + (n+1) H(+)(in) = a plastoquinol + NADP(+) + n H(+)(out). Functionally, NDH shuttles electrons from NAD(P)H:plastoquinone, via FMN and iron-sulfur (Fe-S) centers, to quinones in the photosynthetic chain and possibly in a chloroplast respiratory chain. The immediate electron acceptor for the enzyme in this species is believed to be plastoquinone. Couples the redox reaction to proton translocation, and thus conserves the redox energy in a proton gradient. In Hordeum vulgare (Barley), this protein is NAD(P)H-quinone oxidoreductase subunit 6, chloroplastic (ndhG).